A 320-amino-acid polypeptide reads, in one-letter code: Variant surface glycoprotein ILTAT 1.2 (320 aa).

Residues Asn-146, Asn-282, and Asn-295 are each glycosylated (N-linked (GlcNAc...) asparagine). The disordered stretch occupies residues 297–320 (TKATENGVPVAQTQTGGSETTTEK). Positions 308–320 (QTQTGGSETTTEK) are enriched in low complexity.

The protein resides in the cell membrane. Its function is as follows. VSG forms a coat on the surface of the parasite. The trypanosome evades the immune response of the host by expressing a series of antigenically distinct VSGs from an estimated 1000 VSG genes. This Trypanosoma brucei brucei protein is Variant surface glycoprotein ILTAT 1.2.